The chain runs to 535 residues: CTP synthase (535 aa).

The interval 1 to 270 (MSKNTKYVFV…DRLVCEKLGL (270 aa)) is amidoligase domain. Ser16 provides a ligand contact to CTP. Ser16 contributes to the UTP binding site. 17–22 (SLGKGI) is an ATP binding site. Tyr57 is an L-glutamine binding site. Residue Asp74 coordinates ATP. Mg(2+) is bound by residues Asp74 and Glu144. Residues 151–153 (DIE), 191–196 (KTKPTQ), and Lys227 each bind CTP. Residues 191–196 (KTKPTQ) and Lys227 contribute to the UTP site. A Glutamine amidotransferase type-1 domain is found at 295 to 535 (KIALVGKYVE…GFVGAALNNK (241 aa)). L-glutamine is bound at residue Gly357. Cys384 acts as the Nucleophile; for glutamine hydrolysis in catalysis. Residues 385 to 388 (LGMQ), Glu408, and Arg465 contribute to the L-glutamine site. Active-site residues include His510 and Glu512.

It belongs to the CTP synthase family. As to quaternary structure, homotetramer.

The catalysed reaction is UTP + L-glutamine + ATP + H2O = CTP + L-glutamate + ADP + phosphate + 2 H(+). It catalyses the reaction L-glutamine + H2O = L-glutamate + NH4(+). It carries out the reaction UTP + NH4(+) + ATP = CTP + ADP + phosphate + 2 H(+). It functions in the pathway pyrimidine metabolism; CTP biosynthesis via de novo pathway; CTP from UDP: step 2/2. With respect to regulation, allosterically activated by GTP, when glutamine is the substrate; GTP has no effect on the reaction when ammonia is the substrate. The allosteric effector GTP functions by stabilizing the protein conformation that binds the tetrahedral intermediate(s) formed during glutamine hydrolysis. Inhibited by the product CTP, via allosteric rather than competitive inhibition. Functionally, catalyzes the ATP-dependent amination of UTP to CTP with either L-glutamine or ammonia as the source of nitrogen. Regulates intracellular CTP levels through interactions with the four ribonucleotide triphosphates. The protein is CTP synthase of Clostridium perfringens (strain ATCC 13124 / DSM 756 / JCM 1290 / NCIMB 6125 / NCTC 8237 / Type A).